The primary structure comprises 38 residues: Mu-hexatoxin-Mg1b (38 aa).

3 disulfide bridges follow: Cys-1/Cys-15, Cys-8/Cys-20, and Cys-14/Cys-34. Residue Ser-38 is modified to Serine amide.

Belongs to the neurotoxin 14 (magi-1) family. 09 (magi-1) subfamily. Expressed by the venom gland.

It localises to the secreted. Functionally, insecticidal neurotoxin. Shows competition for site 3 of insect voltage-gated sodium channels (Nav). This chain is Mu-hexatoxin-Mg1b, found in Macrothele gigas (Japanese funnel web spider).